A 591-amino-acid polypeptide reads, in one-letter code: Probable translation initiation factor IF-2 (591 aa).

A tr-type G domain is found at 6-220 (IRTPIVCVMG…IMIGLAQRYM (215 aa)). Residues 15-22 (GHVDHGKT) form a G1 region. 15–22 (GHVDHGKT) contributes to the GTP binding site. Residues 40–44 (AITQH) form a G2 region. The segment at 76–79 (DTPG) is G3. Residues 76–80 (DTPGH) and 130–133 (TKVD) contribute to the GTP site. Residues 130–133 (TKVD) are G4. Residues 198 to 200 (SAH) form a G5 region.

It belongs to the TRAFAC class translation factor GTPase superfamily. Classic translation factor GTPase family. IF-2 subfamily.

Functionally, function in general translation initiation by promoting the binding of the formylmethionine-tRNA to ribosomes. Seems to function along with eIF-2. The polypeptide is Probable translation initiation factor IF-2 (Methanoregula boonei (strain DSM 21154 / JCM 14090 / 6A8)).